A 208-amino-acid chain; its full sequence is T-cell surface glycoprotein CD8 beta chain (208 aa).

Positions 1–21 (MQPWLWLVFSVKLSALWGSSA) are cleaved as a signal peptide. The Ig-like V-type domain maps to 22-131 (LLQTPSSLLV…MVVFGTGTKL (110 aa)). Residues 22–168 (LLQTPSSLLV…KTQKGLTCGL (147 aa)) are Extracellular-facing. N-linked (GlcNAc...) asparagine glycosylation is found at Asn-34, Asn-88, and Asn-94. An intrachain disulfide couples Cys-41 to Cys-115. The chain crosses the membrane as a helical span at residues 169–189 (ITLSLLVACILVLLVSLSVAI). Over 190-208 (HFHCMRRRARIHFMKQFHK) the chain is Cytoplasmic.

In terms of assembly, forms disulfide-linked heterodimers with CD8A at the cell surface. Interacts with CD3D; this interaction couples TCR-CD3 with CD8. Interacts with LCK. Post-translationally, phosphorylated as a consequence of T-cell activation. In terms of processing, palmitoylated at the cytoplasmic tail and thereby targets the heterodimer CD8A/CD8B to lipid rafts unlike CD8A homodimers.

It localises to the cell membrane. Integral membrane glycoprotein that plays an essential role in the immune response and serves multiple functions in responses against both external and internal offenses. In T-cells, functions primarily as a coreceptor for MHC class I molecule:peptide complex. The antigens presented by class I peptides are derived from cytosolic proteins while class II derived from extracellular proteins. Interacts simultaneously with the T-cell receptor (TCR) and the MHC class I proteins presented by antigen presenting cells (APCs). In turn, recruits the Src kinase LCK to the vicinity of the TCR-CD3 complex. A palmitoylation site in the cytoplasmic tail of CD8B chain contributes to partitioning of CD8 into the plasma membrane lipid rafts where signaling proteins are enriched. Once LCK recruited, it initiates different intracellular signaling pathways by phosphorylating various substrates ultimately leading to lymphokine production, motility, adhesion and activation of cytotoxic T-lymphocytes (CTLs). Additionally, plays a critical role in thymic selection of CD8+ T-cells. This is T-cell surface glycoprotein CD8 beta chain (Cd8b) from Rattus norvegicus (Rat).